The sequence spans 402 residues: Phosphoglycerate kinase (402 aa).

Substrate is bound by residues 21–23, Arg36, 59–62, Arg114, and Arg147; these read DLN and HLGR. ATP is bound by residues Lys202, Glu329, and 355-358; that span reads GGDT.

The protein belongs to the phosphoglycerate kinase family. Monomer.

It is found in the cytoplasm. The catalysed reaction is (2R)-3-phosphoglycerate + ATP = (2R)-3-phospho-glyceroyl phosphate + ADP. It functions in the pathway carbohydrate degradation; glycolysis; pyruvate from D-glyceraldehyde 3-phosphate: step 2/5. The chain is Phosphoglycerate kinase from Psychrobacter sp. (strain PRwf-1).